A 763-amino-acid chain; its full sequence is Ethylene receptor 2 (763 aa).

The next 3 membrane-spanning stretches (helical) occupy residues 58–78 (FLIA…ATCS), 86–106 (IVLQ…ITMF), and 115–135 (VVLA…ATAI). Positions 97 and 101 each coordinate Cu cation. The GAF domain maps to 190 to 339 (DRHTILYTTM…VVADQVAVAL (150 aa)). One can recognise a Histidine kinase domain in the interval 382-615 (AMYDGMRRPM…TIMLALQFQL (234 aa)). The region spanning 641-760 (QVILVDSDDT…ALGDELYRVL (120 aa)) is the Response regulatory domain. The residue at position 692 (D692) is a 4-aspartylphosphate.

This sequence belongs to the ethylene receptor family. Cu cation is required as a cofactor. As to expression, expressed in anthers and hulls.

The protein localises to the endoplasmic reticulum membrane. The enzyme catalyses ATP + protein L-histidine = ADP + protein N-phospho-L-histidine.. Functionally, ethylene receptor related to bacterial two-component regulators. Acts as a negative regulator of ethylene signaling. May delay the transition from the vegetative stage to the floral stage by up-regulating GI (GIGANTEA) and RCN1 and cause starch accumulation in stems by down-regulating the alpha-amylase AMY3D. This Oryza sativa subsp. indica (Rice) protein is Ethylene receptor 2.